The primary structure comprises 618 residues: Methionine--tRNA ligase (618 aa).

Positions 12-22 (YYVNAEPHLGH) match the 'HIGH' region motif. C127, C130, C144, and H147 together coordinate Zn(2+). Residues 297 to 301 (KMSKT) carry the 'KMSKS' region motif. K300 contributes to the ATP binding site. Positions 518-618 (DFAKVELRVA…GEVPPGAVVK (101 aa)) constitute a tRNA-binding domain.

The protein belongs to the class-I aminoacyl-tRNA synthetase family. MetG type 2A subfamily. In terms of assembly, homodimer. Zn(2+) is required as a cofactor.

Its subcellular location is the cytoplasm. The enzyme catalyses tRNA(Met) + L-methionine + ATP = L-methionyl-tRNA(Met) + AMP + diphosphate. Its function is as follows. Is required not only for elongation of protein synthesis but also for the initiation of all mRNA translation through initiator tRNA(fMet) aminoacylation. This Thermus thermophilus (strain ATCC 27634 / DSM 579 / HB8) protein is Methionine--tRNA ligase (metG).